Reading from the N-terminus, the 1403-residue chain is DNA-directed RNA polymerase subunit beta' (1403 aa).

Zn(2+)-binding residues include cysteine 71, cysteine 73, cysteine 86, and cysteine 89. The Mg(2+) site is built by aspartate 462, aspartate 464, and aspartate 466. Residues cysteine 811, cysteine 885, cysteine 892, and cysteine 895 each contribute to the Zn(2+) site.

Belongs to the RNA polymerase beta' chain family. In terms of assembly, the RNAP catalytic core consists of 2 alpha, 1 beta, 1 beta' and 1 omega subunit. When a sigma factor is associated with the core the holoenzyme is formed, which can initiate transcription. Mg(2+) is required as a cofactor. Zn(2+) serves as cofactor.

It carries out the reaction RNA(n) + a ribonucleoside 5'-triphosphate = RNA(n+1) + diphosphate. In terms of biological role, DNA-dependent RNA polymerase catalyzes the transcription of DNA into RNA using the four ribonucleoside triphosphates as substrates. The sequence is that of DNA-directed RNA polymerase subunit beta' from Bartonella tribocorum (strain CIP 105476 / IBS 506).